A 676-amino-acid chain; its full sequence is Pescadillo homolog (676 aa).

The disordered stretch occupies residues 277 to 296; sequence TIEGSNKQSNNSSNQEVSRD. The segment covering 281-291 has biased composition (low complexity); the sequence is SNKQSNNSSNQ. Positions 351 to 467 constitute a BRCT domain; that stretch reads EAGALFAPFT…KLLRPDLYAP (117 aa). Residues 471–676 form a disordered region; that stretch reads LPPHLSPWVK…RRKLEKTGEK (206 aa). A compositionally biased stretch (acidic residues) spans 494–519; it reads EQEEEGEAEMAGEEEEEESDEEMEEA. Residues 520-531 are compositionally biased toward basic and acidic residues; sequence PETKKADAKADE. Acidic residues-rich tracts occupy residues 532–541 and 548–581; these read SESEDEDESV and ADSD…DEEE. Positions 571-676 form a coiled coil; it reads EAASESEDEE…RRKLEKTGEK (106 aa). Residues 582–592 show a composition bias toward basic and acidic residues; sequence AARTQHQKELE. A compositionally biased stretch (basic residues) spans 611-624; sequence KKKSSQAKKIAAKK. Over residues 625–635 the composition is skewed to basic and acidic residues; that stretch reads RKEEEELERQK.

It belongs to the pescadillo family. As to quaternary structure, component of the NOP7 complex, composed of erb1, nop7 and ytm1. The complex is held together by erb1, which interacts with nop7 via its N-terminal domain and with ytm1 via a high-affinity interaction between the seven-bladed beta-propeller domains of the 2 proteins. The NOP7 complex associates with the 66S pre-ribosome.

Its subcellular location is the nucleus. The protein resides in the nucleolus. The protein localises to the nucleoplasm. Functionally, component of the NOP7 complex, which is required for maturation of the 25S and 5.8S ribosomal RNAs and formation of the 60S ribosome. This chain is Pescadillo homolog (nop7), found in Aspergillus terreus (strain NIH 2624 / FGSC A1156).